The sequence spans 208 residues: Large ribosomal subunit protein uL3 (208 aa).

Belongs to the universal ribosomal protein uL3 family. In terms of assembly, part of the 50S ribosomal subunit. Forms a cluster with proteins L14 and L19.

Functionally, one of the primary rRNA binding proteins, it binds directly near the 3'-end of the 23S rRNA, where it nucleates assembly of the 50S subunit. This is Large ribosomal subunit protein uL3 from Salinibacter ruber (strain DSM 13855 / M31).